A 484-amino-acid polypeptide reads, in one-letter code: Transcription factor cghD (484 aa).

Positions cysteine 21–cysteine 54 form a DNA-binding region, zn(2)-C6 fungal-type. 4 disordered regions span residues arginine 59 to alanine 117, threonine 136 to serine 174, proline 202 to threonine 242, and histidine 386 to serine 406. Basic and acidic residues predominate over residues arginine 64–threonine 76. Low complexity predominate over residues arginine 77–leucine 107. Residues proline 202–threonine 213 show a composition bias toward low complexity.

It is found in the nucleus. Functionally, transcription factor that regulates the expression of the gene cluster that mediates the biosynthesis of the tetramic acid Sch210972, a potential anti-HIV fungal natural product that contains a decalin core. In Chaetomium globosum (strain ATCC 6205 / CBS 148.51 / DSM 1962 / NBRC 6347 / NRRL 1970) (Soil fungus), this protein is Transcription factor cghD.